The primary structure comprises 238 residues: Uridylate kinase (238 aa).

12–15 lines the ATP pocket; it reads KLSG. Gly54 contributes to the UMP binding site. 2 residues coordinate ATP: Gly55 and Arg59. UMP-binding positions include Asp74 and 135–142; that span reads TGNPYFTT. Thr162, Asn163, Tyr168, and Asp171 together coordinate ATP.

The protein belongs to the UMP kinase family. As to quaternary structure, homohexamer.

The protein localises to the cytoplasm. The enzyme catalyses UMP + ATP = UDP + ADP. Its pathway is pyrimidine metabolism; CTP biosynthesis via de novo pathway; UDP from UMP (UMPK route): step 1/1. With respect to regulation, inhibited by UTP. Functionally, catalyzes the reversible phosphorylation of UMP to UDP. This chain is Uridylate kinase, found in Nitrobacter winogradskyi (strain ATCC 25391 / DSM 10237 / CIP 104748 / NCIMB 11846 / Nb-255).